Reading from the N-terminus, the 345-residue chain is Dihydroorotase (345 aa).

Zn(2+)-binding residues include His-13 and His-15. Residues 15–17 (HLR) and Asn-41 each bind substrate. 3 residues coordinate Zn(2+): Lys-99, His-136, and His-174. Lys-99 is subject to N6-carboxylysine. His-136 lines the substrate pocket. Leu-219 lines the substrate pocket. Asp-247 contacts Zn(2+). Asp-247 is an active-site residue. Residues His-251 and Ala-263 each contribute to the substrate site.

It belongs to the metallo-dependent hydrolases superfamily. DHOase family. Class II DHOase subfamily. As to quaternary structure, homodimer. Zn(2+) is required as a cofactor.

The catalysed reaction is (S)-dihydroorotate + H2O = N-carbamoyl-L-aspartate + H(+). It functions in the pathway pyrimidine metabolism; UMP biosynthesis via de novo pathway; (S)-dihydroorotate from bicarbonate: step 3/3. Catalyzes the reversible cyclization of carbamoyl aspartate to dihydroorotate. The protein is Dihydroorotase of Acaryochloris marina (strain MBIC 11017).